The primary structure comprises 40 residues: Antifungal protein ginkbilobin-1 (40 aa).

The Gnk2-homologous domain occupies 3 to 40 (TAFVSSAHNTQKIPAGAPFNRNLRAMLADLRQNAAFAG). Asn-11 provides a ligand contact to alpha-D-mannopyranose.

In terms of tissue distribution, expressed in seeds (at the protein level).

Possesses antifungal activity against B.cinerea, M.arachidicola, F.oxysporum, R.solani and C.comatus and moderate antibacterial activity against S.aureus, P.aeruginosa and E.coli. Inhibits HIV-1 reverse transcriptase and proliferation of murine splenocytes. Exerts antifungal activity through its carbohydrate-binding specificity. In Ginkgo biloba (Ginkgo), this protein is Antifungal protein ginkbilobin-1.